Consider the following 145-residue polypeptide: Sperm mitochondrial-associated cysteine-rich protein (145 aa).

Residues serine 38, serine 45, serine 113, and serine 131 each carry the phosphoserine modification. The tract at residues 105–145 (CSSENKTESDSDGSGQTQDRGAQTQQSPQGGQGNWNQKKTK) is disordered. Positions 116-145 (DGSGQTQDRGAQTQQSPQGGQGNWNQKKTK) are enriched in polar residues.

In terms of tissue distribution, testis. Selectively expressed in the spermatids of seminiferous tubules and in flagella of epididymal sperm.

It localises to the cytoplasm. It is found in the mitochondrion membrane. Functionally, involved in sperm motility. Its absence is associated with genetic background dependent male infertility. Infertility may be due to reduced sperm motility in the female reproductive tract and inability to penetrate the oocyte zona pellucida. In Rattus norvegicus (Rat), this protein is Sperm mitochondrial-associated cysteine-rich protein (Smcp).